We begin with the raw amino-acid sequence, 212 residues long: Redox-sensing transcriptional repressor Rex (212 aa).

A DNA-binding region (H-T-H motif) is located at residues 17-56; it reads LYARSLRYLLEEGIHSVSSQELGERINVTAAQIRKDLSYF. Residue 91 to 96 coordinates NAD(+); the sequence is GIGLLG.

This sequence belongs to the transcriptional regulatory Rex family. Homodimer.

The protein localises to the cytoplasm. Functionally, modulates transcription in response to changes in cellular NADH/NAD(+) redox state. This Chloroflexus aggregans (strain MD-66 / DSM 9485) protein is Redox-sensing transcriptional repressor Rex.